The primary structure comprises 530 residues: 4-alpha-glucanotransferase (530 aa).

It belongs to the disproportionating enzyme family.

The protein resides in the cytoplasm. It carries out the reaction Transfers a segment of a (1-&gt;4)-alpha-D-glucan to a new position in an acceptor, which may be glucose or a (1-&gt;4)-alpha-D-glucan.. In Chlamydia caviae (strain ATCC VR-813 / DSM 19441 / 03DC25 / GPIC) (Chlamydophila caviae), this protein is 4-alpha-glucanotransferase (malQ).